The chain runs to 367 residues: DNA replication and repair protein RecF (367 aa).

31 to 38 (GENGSGKT) provides a ligand contact to ATP.

It belongs to the RecF family.

The protein localises to the cytoplasm. The RecF protein is involved in DNA metabolism; it is required for DNA replication and normal SOS inducibility. RecF binds preferentially to single-stranded, linear DNA. It also seems to bind ATP. The sequence is that of DNA replication and repair protein RecF from Saccharophagus degradans (strain 2-40 / ATCC 43961 / DSM 17024).